The sequence spans 412 residues: Subtilisin-like protease 6 (412 aa).

An N-terminal signal peptide occupies residues 1–20; sequence MGFITKAIPIVLAALSTVNG. Positions 21–126 are excised as a propeptide; sequence ARILEAGPHA…VVRTTTNGTN (106 aa). Residues 36 to 120 enclose the Inhibitor I9 domain; it reads KYIVVMKREV…FIEPDFVVRT (85 aa). Residues Asn-123 and Asn-126 are each glycosylated (N-linked (GlcNAc...) asparagine). Positions 135 to 412 constitute a Peptidase S8 domain; sequence SWGLARVGSK…GKLIYNGSGK (278 aa). Catalysis depends on charge relay system residues Asp-167 and His-198. 2 N-linked (GlcNAc...) asparagine glycosylation sites follow: Asn-252 and Asn-264. Ser-358 serves as the catalytic Charge relay system. Asn-408 is a glycosylation site (N-linked (GlcNAc...) asparagine).

It belongs to the peptidase S8 family.

The protein resides in the secreted. Functionally, secreted subtilisin-like serine protease with keratinolytic activity that contributes to pathogenicity. This is Subtilisin-like protease 6 (SUB6) from Trichophyton rubrum (Athlete's foot fungus).